Reading from the N-terminus, the 154-residue chain is Transcription antitermination protein NusB (154 aa).

Belongs to the NusB family.

In terms of biological role, involved in transcription antitermination. Required for transcription of ribosomal RNA (rRNA) genes. Binds specifically to the boxA antiterminator sequence of the ribosomal RNA (rrn) operons. This chain is Transcription antitermination protein NusB, found in Rickettsia typhi (strain ATCC VR-144 / Wilmington).